The chain runs to 444 residues: Adenylosuccinate synthetase (444 aa).

GTP contacts are provided by residues 19–25 (GDEGKGK) and 47–49 (GHT). Residue Asp20 is the Proton acceptor of the active site. Asp20 and Gly47 together coordinate Mg(2+). IMP is bound by residues 20-23 (DEGK), 45-48 (NAGH), Thr139, Arg153, Gln234, Thr249, and Arg317. His48 serves as the catalytic Proton donor. 313-319 (TVTGRPR) is a binding site for substrate. GTP is bound by residues Arg319, 345 to 347 (KLD), and 427 to 429 (STG).

This sequence belongs to the adenylosuccinate synthetase family. As to quaternary structure, homodimer. Mg(2+) serves as cofactor.

It localises to the cytoplasm. It catalyses the reaction IMP + L-aspartate + GTP = N(6)-(1,2-dicarboxyethyl)-AMP + GDP + phosphate + 2 H(+). The protein operates within purine metabolism; AMP biosynthesis via de novo pathway; AMP from IMP: step 1/2. Its function is as follows. Plays an important role in the de novo pathway of purine nucleotide biosynthesis. Catalyzes the first committed step in the biosynthesis of AMP from IMP. This chain is Adenylosuccinate synthetase, found in Methylibium petroleiphilum (strain ATCC BAA-1232 / LMG 22953 / PM1).